Consider the following 438-residue polypeptide: UPF0229 protein R01398 (438 aa).

A disordered region spans residues 55 to 107; sequence PARGVNEPAFQPDSNSGERRHVLPGNREFAAGDRIPKRGSGGGAGNAGAGTGQ. Residues 93–105 show a composition bias toward gly residues; sequence GSGGGAGNAGAGT.

The protein belongs to the UPF0229 family.

The sequence is that of UPF0229 protein R01398 from Rhizobium meliloti (strain 1021) (Ensifer meliloti).